Consider the following 101-residue polypeptide: Small ribosomal subunit protein uS14 (101 aa).

Belongs to the universal ribosomal protein uS14 family. Part of the 30S ribosomal subunit. Contacts proteins S3 and S10.

Functionally, binds 16S rRNA, required for the assembly of 30S particles and may also be responsible for determining the conformation of the 16S rRNA at the A site. This chain is Small ribosomal subunit protein uS14, found in Gluconobacter oxydans (strain 621H) (Gluconobacter suboxydans).